The chain runs to 179 residues: Protein HoxT (179 aa).

This is Protein HoxT (hoxT) from Cupriavidus necator (strain ATCC 17699 / DSM 428 / KCTC 22496 / NCIMB 10442 / H16 / Stanier 337) (Ralstonia eutropha).